A 166-amino-acid chain; its full sequence is Replication restart protein DnaT (166 aa).

It belongs to the DnaT family. In terms of assembly, homooligomerizes. Interacts with PriB. Component of the replication restart primosome. Primosome assembly occurs via a 'hand-off' mechanism. PriA binds to replication forks, subsequently PriB then DnaT bind; DnaT then displaces ssDNA to generate the helicase loading substrate.

Involved in the restart of stalled replication forks, which reloads the replicative helicase on sites other than the origin of replication. Can function in multiple replication restart pathways. Displaces ssDNA from a PriB-ssDNA complex. Probably forms a spiral filament on ssDNA. In Buchnera aphidicola subsp. Schizaphis graminum (strain Sg), this protein is Replication restart protein DnaT.